Reading from the N-terminus, the 199-residue chain is Holliday junction branch migration complex subunit RuvA (199 aa).

Residues 1–63 (MIASVRGEVL…EDSMTLYGFT (63 aa)) are domain I. The interval 64 to 142 (DAETRDLFLT…AAGAAGAPAG (79 aa)) is domain II. The interval 143–153 (AARNGHAVRGP) is flexible linker. The domain III stretch occupies residues 153–199 (PVVEALVGLGFAAKQAEEATDKVLAAEPEAGTSGALRAALSLLGKSR).

It belongs to the RuvA family. Homotetramer. Forms an RuvA(8)-RuvB(12)-Holliday junction (HJ) complex. HJ DNA is sandwiched between 2 RuvA tetramers; dsDNA enters through RuvA and exits via RuvB. An RuvB hexamer assembles on each DNA strand where it exits the tetramer. Each RuvB hexamer is contacted by two RuvA subunits (via domain III) on 2 adjacent RuvB subunits; this complex drives branch migration. In the full resolvosome a probable DNA-RuvA(4)-RuvB(12)-RuvC(2) complex forms which resolves the HJ.

It localises to the cytoplasm. Functionally, the RuvA-RuvB-RuvC complex processes Holliday junction (HJ) DNA during genetic recombination and DNA repair, while the RuvA-RuvB complex plays an important role in the rescue of blocked DNA replication forks via replication fork reversal (RFR). RuvA specifically binds to HJ cruciform DNA, conferring on it an open structure. The RuvB hexamer acts as an ATP-dependent pump, pulling dsDNA into and through the RuvAB complex. HJ branch migration allows RuvC to scan DNA until it finds its consensus sequence, where it cleaves and resolves the cruciform DNA. This is Holliday junction branch migration complex subunit RuvA from Mycobacterium avium (strain 104).